The following is a 239-amino-acid chain: Homeobox-leucine zipper protein HOX12 (239 aa).

The disordered stretch occupies residues 25-65; it reads ATSGGEQKKARQRRRRKVKPEAAAALAGESGGDEQAKKRRL. A DNA-binding region (homeobox) is located at residues 58 to 117; that stretch reads EQAKKRRLSDEQARFLEMSFKKERKLETPRKVQLAAELGLDAKQVAVWFQNRRARHKSKL. Residues 107–168 adopt a coiled-coil conformation; it reads QNRRARHKSK…KLAAVAAATT (62 aa).

It belongs to the HD-ZIP homeobox family. Class I subfamily. Expressed in seedlings, roots, stems, leaf sheaths and panicles.

Its subcellular location is the nucleus. In terms of biological role, probable transcription factor. This is Homeobox-leucine zipper protein HOX12 (HOX12) from Oryza sativa subsp. japonica (Rice).